A 339-amino-acid polypeptide reads, in one-letter code: Heat-inducible transcription repressor HrcA (339 aa).

This sequence belongs to the HrcA family.

Negative regulator of class I heat shock genes (grpE-dnaK-dnaJ and groELS operons). Prevents heat-shock induction of these operons. In Paraburkholderia xenovorans (strain LB400), this protein is Heat-inducible transcription repressor HrcA.